Here is a 319-residue protein sequence, read N- to C-terminus: Mitochondrial thiamine pyrophosphate carrier 1 (319 aa).

Solcar repeat units lie at residues 12-110 (GQRY…VTQS), 121-207 (PQPA…VRVP), and 214-309 (PFGS…VLKI). The next 6 helical transmembrane spans lie at 17–35 (VVAA…VAPL), 91–107 (LLYI…YRTV), 127–147 (FVSG…FDLL), 182–201 (GVSA…FATY), 221–237 (TAGV…VFPL), and 284–301 (GLTV…VTMW).

Belongs to the mitochondrial carrier (TC 2.A.29) family.

It is found in the mitochondrion inner membrane. Mitochondrial transporter that mediates uptake of thiamine pyrophosphate (ThPP) into mitochondria. This is Mitochondrial thiamine pyrophosphate carrier 1 (TPC1) from Coccidioides immitis (strain RS) (Valley fever fungus).